The following is a 429-amino-acid chain: Endo-1,4-beta-xylanase 1 (429 aa).

The first 19 residues, 1–19, serve as a signal peptide directing secretion; sequence MQTKSILTAALLAAAPASA. In terms of domain architecture, GH10 spans 43–336; the sequence is NSDQQYNRIL…KPAWTSISSV (294 aa). Glu150 serves as the catalytic Proton donor. The Nucleophile role is filled by Glu257. A disulfide bond links Cys286 and Cys292. The interval 364–395 is disordered; that stretch reads TTPPPISSPIVPSTTTTSAVPTTTVSPPEPEQ. Low complexity predominate over residues 371–389; it reads SPIVPSTTTTSAVPTTTVS. In terms of domain architecture, CBM1 spans 393-429; that stretch reads PEQTRWGQCGGIGWNGPTKCQSPWTCTRLNDWYFQCL.

Belongs to the glycosyl hydrolase 10 (cellulase F) family.

Its subcellular location is the secreted. The enzyme catalyses Endohydrolysis of (1-&gt;4)-beta-D-xylosidic linkages in xylans.. Its pathway is glycan degradation; xylan degradation. In terms of biological role, endo-1,4-beta-xylanase involved in the hydrolysis of xylan, a major structural heterogeneous polysaccharide found in plant biomass representing the second most abundant polysaccharide in the biosphere, after cellulose. The sequence is that of Endo-1,4-beta-xylanase 1 from Humicola insolens (Soft-rot fungus).